A 725-amino-acid polypeptide reads, in one-letter code: Catalase-peroxidase (725 aa).

Residues 1–20 (MSSEAKCPFPHAANRSRSNQ) are disordered. A cross-link (tryptophyl-tyrosyl-methioninium (Trp-Tyr) (with M-241)) is located at residues 91–215 (WHATGTYRTM…LSATHMGLIY (125 aa)). Histidine 92 functions as the Proton acceptor in the catalytic mechanism. Positions 215–241 (YVNPEGPDGSGDYMAAAKDIRATFYRM) form a cross-link, tryptophyl-tyrosyl-methioninium (Tyr-Met) (with W-91). Histidine 256 provides a ligand contact to heme b.

Belongs to the peroxidase family. Peroxidase/catalase subfamily. As to quaternary structure, homodimer or homotetramer. The cofactor is heme b. Formation of the three residue Trp-Tyr-Met cross-link is important for the catalase, but not the peroxidase activity of the enzyme.

The catalysed reaction is H2O2 + AH2 = A + 2 H2O. It catalyses the reaction 2 H2O2 = O2 + 2 H2O. Functionally, bifunctional enzyme with both catalase and broad-spectrum peroxidase activity. In Janthinobacterium sp. (strain Marseille) (Minibacterium massiliensis), this protein is Catalase-peroxidase.